A 161-amino-acid polypeptide reads, in one-letter code: GTP-dependent dephospho-CoA kinase (161 aa).

Asp-37, Ile-38, Asp-56, Lys-58, Glu-112, and Asp-135 together coordinate GTP.

This sequence belongs to the GTP-dependent DPCK family.

It catalyses the reaction 3'-dephospho-CoA + GTP = GDP + CoA + H(+). Its pathway is cofactor biosynthesis; coenzyme A biosynthesis. Functionally, catalyzes the GTP-dependent phosphorylation of the 3'-hydroxyl group of dephosphocoenzyme A to form coenzyme A (CoA). This chain is GTP-dependent dephospho-CoA kinase, found in Methanococcus aeolicus (strain ATCC BAA-1280 / DSM 17508 / OCM 812 / Nankai-3).